Consider the following 627-residue polypeptide: Glycerophosphodiester phosphodiesterase domain-containing protein 4 (627 aa).

Over 1-17 (MLLFLWIETSNEYFNFD) the chain is Cytoplasmic. The chain crosses the membrane as a helical span at residues 18–38 (WVIFLGTGYWFYWSIFILSLA). Position 39 (G39) is a topological domain, extracellular. A helical membrane pass occupies residues 40 to 60 (ILTAYSSLLLLLGLLLLWEGI). The Cytoplasmic portion of the chain corresponds to 61–69 (ELYLHLCHK). Residues 70 to 90 (ILILLVILPCVILMFIICKFW) form a helical membrane-spanning segment. Topologically, residues 91–107 (KERWLVAGLSLQIFAPY) are extracellular. Residues 108–128 (VHLVSITVMVILFWPVAIYVA) traverse the membrane as a helical segment. The Cytoplasmic portion of the chain corresponds to 129-162 (RLEREVRMRRYRMTHSEKKRLKKCNVIARLRGLQ). A helical membrane pass occupies residues 163–183 (VAVGLPFLLIFLSLCLMPLGI). Residues 184–468 (YSPCIQEKEN…PHFFMTPKFY (285 aa)) lie on the Extracellular side of the membrane. The 260-residue stretch at 198–457 (PTLFGHRGAP…DNIGLLSQLN (260 aa)) folds into the GP-PDE domain. A divalent metal cation is bound by residues E230, D232, and H245. N308 and N397 each carry an N-linked (GlcNAc...) asparagine glycan. A helical transmembrane segment spans residues 469 to 489 (MFIWLLVDIISVLFIVAIFCF). The Cytoplasmic portion of the chain corresponds to 490–627 (HWRRETIKEK…TMPSVEVPYP (138 aa)).

The protein belongs to the glycerophosphoryl diester phosphodiesterase family.

Its subcellular location is the membrane. The sequence is that of Glycerophosphodiester phosphodiesterase domain-containing protein 4 (GDPD4) from Macaca fascicularis (Crab-eating macaque).